The following is a 460-amino-acid chain: GTPase Der (460 aa).

EngA-type G domains lie at 2 to 164 and 196 to 368; these read QSII…HEEF and IRVG…ENFT. GTP is bound by residues 8–15, 55–59, 116–119, 202–209, 249–253, and 313–316; these read GKPNVGKS, DSGGL, NKVD, GRVNVGKS, DTAGI, and NKWD. The region spanning 369-453 is the KH-like domain; it reads QKIQTSKLNT…PLVIASRKKG (85 aa).

The protein belongs to the TRAFAC class TrmE-Era-EngA-EngB-Septin-like GTPase superfamily. EngA (Der) GTPase family. In terms of assembly, associates with the 50S ribosomal subunit.

Functionally, GTPase that plays an essential role in the late steps of ribosome biogenesis. In Campylobacter jejuni subsp. jejuni serotype O:2 (strain ATCC 700819 / NCTC 11168), this protein is GTPase Der.